A 321-amino-acid chain; its full sequence is Methyltransferase cfoB (321 aa).

Belongs to the methyltransferase superfamily.

The protein operates within secondary metabolite biosynthesis; flavonoid biosynthesis. In terms of biological role, methyltransferase; part of the gene cluster that mediates the biosynthesis of chlorflavonin, a fungal flavonoid with acetolactate synthase inhibitory activity. Within the pathway, cfoB is responsible for the methylation at position C7-OH of flavonoid. The pathway begins with the PKS-NRPS hybrid synthetase cfoA that uses benzoic acid or p-hydroxybenzoic acid as a starter unit with four rounds of chain elongation using malonyl-CoA to form the chalcone skeleton. Then, a new type of chalcone isomerase, cfoK, catalyzes the conversion of the chalcone into a flavanone by a histidine-mediated oxa-Michael addition mechanism. The desaturation of flavanone to flavone is catalyzed by a new type of flavone synthase, the flavin mononucleotide (FMN)-dependent oxidoreductase cfoJ. Monooxygenases cfoF, cfoG, and P450 cfoH are responsible for the hydroxylation of the flavonoid skeleton at sites C3, C8, and C2', respectively. Like cfoF, the dehydratase cfoI also plays a role in the hydroxylation of position C3. Methyltransferases cfoB, cfoC, and cfoD then catalyze the methylation of C7-OH, C8-OH, and C3-OH, respectively. Finally, the monooxygenase cfoE is responsible for the chlorination of flavonoid at position C3'. The polypeptide is Methyltransferase cfoB (Aspergillus candidus).